The following is a 413-amino-acid chain: Dual-specificity RNA methyltransferase RlmN (413 aa).

Residue Glu126 is the Proton acceptor of the active site. The Radical SAM core domain maps to 132–381 (EEGRGTLCIS…IRTPRGRDIL (250 aa)). Cysteines 139 and 384 form a disulfide. Residues Cys146, Cys150, and Cys153 each coordinate [4Fe-4S] cluster. S-adenosyl-L-methionine-binding positions include 210 to 211 (GE), Ser242, 264 to 266 (SLH), and Asn341. Cys384 (S-methylcysteine intermediate) is an active-site residue.

Belongs to the radical SAM superfamily. RlmN family. [4Fe-4S] cluster serves as cofactor.

Its subcellular location is the cytoplasm. It carries out the reaction adenosine(2503) in 23S rRNA + 2 reduced [2Fe-2S]-[ferredoxin] + 2 S-adenosyl-L-methionine = 2-methyladenosine(2503) in 23S rRNA + 5'-deoxyadenosine + L-methionine + 2 oxidized [2Fe-2S]-[ferredoxin] + S-adenosyl-L-homocysteine. It catalyses the reaction adenosine(37) in tRNA + 2 reduced [2Fe-2S]-[ferredoxin] + 2 S-adenosyl-L-methionine = 2-methyladenosine(37) in tRNA + 5'-deoxyadenosine + L-methionine + 2 oxidized [2Fe-2S]-[ferredoxin] + S-adenosyl-L-homocysteine. Functionally, specifically methylates position 2 of adenine 2503 in 23S rRNA and position 2 of adenine 37 in tRNAs. m2A2503 modification seems to play a crucial role in the proofreading step occurring at the peptidyl transferase center and thus would serve to optimize ribosomal fidelity. This Sinorhizobium medicae (strain WSM419) (Ensifer medicae) protein is Dual-specificity RNA methyltransferase RlmN.